The sequence spans 475 residues: SAM50-like protein SPAC17C9.06 (475 aa).

A POTRA domain is found at 44–130; the sequence is VGISSIRVTG…LDVTIQVKEK (87 aa).

This sequence belongs to the SAM50/omp85 family. As to quaternary structure, associates with the mitochondrial contact site and cristae organizing system (MICOS) complex (also known as MINOS or MitOS complex).

The protein resides in the mitochondrion outer membrane. Its function is as follows. May be required for the assembly pathway of mitochondrial outer membrane proteins. This is SAM50-like protein SPAC17C9.06 from Schizosaccharomyces pombe (strain 972 / ATCC 24843) (Fission yeast).